The following is a 1192-amino-acid chain: Protein FAM83H (1192 aa).

5 disordered regions span residues 435–542 (EGMG…VKQG), 557–661 (DGGE…LAEP), 695–720 (SKLE…ESEP), 737–1082 (LSRE…SNII), and 1094–1145 (ILEQ…ERDN). A compositionally biased stretch (basic and acidic residues) spans 437 to 447 (MGHDDRGHYDR). Composition is skewed to polar residues over residues 523–538 (QLFS…QDPS) and 629–652 (SDLG…ASST). Composition is skewed to basic and acidic residues over residues 737–759 (LSRE…KHAS) and 768–789 (DTKE…EENK). The segment covering 790-810 (VTQPTVPSASQQITSSLNMND) has biased composition (polar residues). The span at 820-834 (DQQEKRKTSKLELDL) shows a compositional bias: basic and acidic residues. The span at 861 to 878 (TSEQSTVKAQEPTVSQTD) shows a compositional bias: polar residues. Basic and acidic residues-rich tracts occupy residues 880 to 892 (VPHR…KPKP) and 914 to 925 (APKKEPVKEPTK). Positions 926–946 (SLKPFPSPKFLKPFKSSQSSS) are enriched in low complexity. Residues 994–1005 (ESKDTKALDFLK) show a composition bias toward basic and acidic residues. Polar residues predominate over residues 1068-1082 (KPTTSRYQSSTSNII). Residues 1107-1122 (QQNEESGKGDGGKDDV) show a composition bias toward basic and acidic residues.

The protein belongs to the FAM83 family.

The protein resides in the cytoplasm. The protein localises to the cytoskeleton. Its function is as follows. May play a role in keratin cytoskeleton disassembly. The protein is Protein FAM83H of Danio rerio (Zebrafish).